We begin with the raw amino-acid sequence, 541 residues long: Developmental and secondary metabolism regulator VEL1 (541 aa).

One can recognise a Velvet domain in the interval 26-220; sequence NRHLWYQLTV…ADQGCRVRIR (195 aa). The Nuclear localization signal signature appears at 40 to 45; that stretch reads ERARAC. 2 disordered regions span residues 222-447 and 464-483; these read DVRM…MPTQ and PIEAQTEPLPPPPLLPTGGK. Residues 230–244 are compositionally biased toward basic and acidic residues; it reads GKGSGYDRREEEYAR. Low complexity predominate over residues 289 to 298; the sequence is APSLPHAPSL. Pro residues-rich tracts occupy residues 299–314, 345–355, and 425–439; these read PHAPPPPAYDAPPPAA, APIPPVTPTGP, and SPAPMTPYIAPPAPS. The interval 444–472 is PEST; it reads MPTQSSLAPLKIASLVSPLPPIEAQTEPL.

The protein belongs to the velvet family. VeA subfamily. Component of the heterotrimeric velvet complex composed of LAE1, VEL1 and VEL2; VEL1 acting as a bridging protein between LAE1 and VEL2.

It is found in the nucleus. Its subcellular location is the cytoplasm. In terms of biological role, component of the velvet transcription factor complex that controls sexual/asexual developmental ratio in response to light, promoting sexual development in the darkness while stimulating asexual sporulation under illumination. The velvet complex acts as a global regulator for secondary metabolite gene expression. Controls the expression of the gliotoxin gene cluster. Plays a key role in mycoparasitism. This Hypocrea virens (strain Gv29-8 / FGSC 10586) (Gliocladium virens) protein is Developmental and secondary metabolism regulator VEL1.